A 160-amino-acid polypeptide reads, in one-letter code: Phosphopantetheine adenylyltransferase (160 aa).

A substrate-binding site is contributed by serine 10. Residues 10-11 and histidine 18 each bind ATP; that span reads SF. Substrate is bound by residues lysine 42, threonine 74, and arginine 88. Residues 89-91, glutamate 99, and 124-130 each bind ATP; these read GLR and YSFISST.

It belongs to the bacterial CoaD family. As to quaternary structure, homohexamer. Mg(2+) is required as a cofactor.

The protein resides in the cytoplasm. It carries out the reaction (R)-4'-phosphopantetheine + ATP + H(+) = 3'-dephospho-CoA + diphosphate. The protein operates within cofactor biosynthesis; coenzyme A biosynthesis; CoA from (R)-pantothenate: step 4/5. Reversibly transfers an adenylyl group from ATP to 4'-phosphopantetheine, yielding dephospho-CoA (dPCoA) and pyrophosphate. This is Phosphopantetheine adenylyltransferase from Leptospira interrogans serogroup Icterohaemorrhagiae serovar copenhageni (strain Fiocruz L1-130).